We begin with the raw amino-acid sequence, 482 residues long: Putative metallophosphoesterase F40B5.2 (482 aa).

Transmembrane regions (helical) follow at residues 15–35 (MNLK…SIAI), 129–149 (ALMM…YIFL), 156–176 (IAIT…FLLI), and 205–225 (CYHI…GLYT). Residues Asp-256, His-258, Asp-288, Asn-319, His-421, and His-423 each coordinate a divalent metal cation.

The protein belongs to the metallophosphoesterase superfamily. LOC643853 family.

It is found in the membrane. The chain is Putative metallophosphoesterase F40B5.2 from Caenorhabditis elegans.